Reading from the N-terminus, the 479-residue chain is MSSFRVLDLVKPLTGYLPEVIAPERKVPFNQKLMWTGVTLLIFLVMSEIPLYGIVSSESSDPLFWLRMMLASNRGTLMELGISPIVSSGMVFQLLQGTQLLDVNLESKTDRETFQTAQKLFAILLSIGQATVYVLTGIYGRPSDLGVGVCLLLILQLVFAGIIVILLDELLQKGYGLGSGISLFMATNICEQIFWKAFAPTTVNNGRGDEFEGAVVALFHLLSVRKDKRRALVEAFYRQNLPNIFQLLATFIVFFLVVYLQGFRYEIPVRSTRQRGQNGLYPIKLFYTSNTPIMLQSALTSNFFIISQMLFQRFPLNPVVRLFGVWDARPGSAQLFASNGLAYYIQPPLSLTEALLDPIKTVIYVSFVLSVCALFSKTWIEISGTAPRDVAKQFKDQGLVIAGRRETSVYKELKRIIPTAAAFGGASIGALSVACDLLGTLGSGTSILLAVTTIYSYYEIAAKEGGFQKHIVEGFSEAF.

The Cytoplasmic portion of the chain corresponds to 1-33; sequence MSSFRVLDLVKPLTGYLPEVIAPERKVPFNQKL. Residues 34 to 54 form a helical membrane-spanning segment; it reads MWTGVTLLIFLVMSEIPLYGI. The Lumenal portion of the chain corresponds to 55 to 76; that stretch reads VSSESSDPLFWLRMMLASNRGT. The helical transmembrane segment at 77 to 97 threads the bilayer; that stretch reads LMELGISPIVSSGMVFQLLQG. Residues 98-119 are Cytoplasmic-facing; sequence TQLLDVNLESKTDRETFQTAQK. The helical transmembrane segment at 120–140 threads the bilayer; sequence LFAILLSIGQATVYVLTGIYG. Over 141 to 146 the chain is Lumenal; that stretch reads RPSDLG. Residues 147 to 167 form a helical membrane-spanning segment; it reads VGVCLLLILQLVFAGIIVILL. The Cytoplasmic portion of the chain corresponds to 168 to 246; it reads DELLQKGYGL…YRQNLPNIFQ (79 aa). Residues 247-267 form a helical membrane-spanning segment; that stretch reads LLATFIVFFLVVYLQGFRYEI. The Lumenal portion of the chain corresponds to 268–361; it reads PVRSTRQRGQ…TEALLDPIKT (94 aa). Residues 362 to 382 traverse the membrane as a helical segment; sequence VIYVSFVLSVCALFSKTWIEI. Residues 383–415 are Cytoplasmic-facing; that stretch reads SGTAPRDVAKQFKDQGLVIAGRRETSVYKELKR. The helical transmembrane segment at 416–434 threads the bilayer; it reads IIPTAAAFGGASIGALSVA. Residues 435–440 lie on the Lumenal side of the membrane; it reads CDLLGT. Residues 441–458 form a helical membrane-spanning segment; sequence LGSGTSILLAVTTIYSYY. The Cytoplasmic portion of the chain corresponds to 459-479; the sequence is EIAAKEGGFQKHIVEGFSEAF.

Belongs to the SecY/SEC61-alpha family. As to quaternary structure, heterotrimeric complex composed of SEC61-alpha, SEC61-beta and SEC61-gamma.

Its subcellular location is the endoplasmic reticulum membrane. Appears to play a crucial role in the insertion of secretory and membrane polypeptides into the ER. It is required for assembly of membrane and secretory proteins and is essential for cell growth. It interacts with other membrane proteins required for protein translocation. Upon binding to SEC62/63 complex, secretory precursor polypeptides may engage SEC61 to begin membrane penetration event. A cycle of assembly and disassembly of SEC62/63 from SEC61 may govern the activity of the translocase. In Wickerhamomyces anomalus (Yeast), this protein is Protein transport protein SEC61 subunit alpha (SEC61).